The chain runs to 424 residues: Histidinol dehydrogenase (424 aa).

NAD(+) contacts are provided by Tyr-124, Gln-186, and Asn-209. Residues Ser-232, Gln-254, and His-257 each coordinate substrate. 2 residues coordinate Zn(2+): Gln-254 and His-257. Residues Glu-322 and His-323 each act as proton acceptor in the active site. Substrate is bound by residues His-323, Asp-356, Glu-410, and His-415. Asp-356 is a Zn(2+) binding site. A Zn(2+)-binding site is contributed by His-415.

The protein belongs to the histidinol dehydrogenase family. The cofactor is Zn(2+).

It catalyses the reaction L-histidinol + 2 NAD(+) + H2O = L-histidine + 2 NADH + 3 H(+). Its pathway is amino-acid biosynthesis; L-histidine biosynthesis; L-histidine from 5-phospho-alpha-D-ribose 1-diphosphate: step 9/9. In terms of biological role, catalyzes the sequential NAD-dependent oxidations of L-histidinol to L-histidinaldehyde and then to L-histidine. The chain is Histidinol dehydrogenase from Moorella thermoacetica (strain ATCC 39073 / JCM 9320).